Consider the following 616-residue polypeptide: Chaperone protein HscA (616 aa).

The protein belongs to the heat shock protein 70 family.

Functionally, chaperone involved in the maturation of iron-sulfur cluster-containing proteins. Has a low intrinsic ATPase activity which is markedly stimulated by HscB. Involved in the maturation of IscU. This is Chaperone protein HscA from Salmonella agona (strain SL483).